We begin with the raw amino-acid sequence, 738 residues long: Protein Aster-B (738 aa).

The segment at 1 to 81 is disordered; it reads MKGFKLSCTA…SGGKNSKKSQ (81 aa). The segment covering 8–19 has biased composition (polar residues); it reads CTASNSNRSTPA. Residues Ser-28 and Ser-30 each carry the phosphoserine modification. Residues 41 to 51 show a composition bias toward basic and acidic residues; the sequence is MVEKGSDHSSD. Positions 59–70 are enriched in low complexity; it reads QGVQRSCSSQSG. Residues 96-163 enclose the GRAM domain; that stretch reads EDFRKLFKQL…KDICSMTKEK (68 aa). Residues 254–301 form a disordered region; it reads EENEVNDSSSKSSIETKPDASPQLPKKSITNSTLTSTGSSEAPVSFDG. Polar residues predominate over residues 259–268; sequence NDSSSKSSIE. At Ser-274 the chain carries Phosphoserine. A compositionally biased stretch (polar residues) spans 281–295; the sequence is SITNSTLTSTGSSEA. Positions 372-543 constitute a VASt domain; that stretch reads SGRQYVNEVF…ELAKTESTYL (172 aa). Tyr-389 is subject to Phosphotyrosine. The tract at residues 544-566 is disordered; sequence AEMHRQSPKEKASKTTTVRRRKR. The span at 545 to 556 shows a compositional bias: basic and acidic residues; it reads EMHRQSPKEKAS. Phosphoserine occurs at positions 550 and 581. 3 positions are modified to phosphothreonine: Thr-584, Thr-585, and Thr-587. Residues 623–643 form a helical membrane-spanning segment; that stretch reads LLLVISCVICFSLVLLVILNM.

The protein localises to the endoplasmic reticulum membrane. It is found in the cell membrane. Its function is as follows. Cholesterol transporter that mediates non-vesicular transport of cholesterol from the plasma membrane (PM) to the endoplasmic reticulum (ER). Contains unique domains for binding cholesterol and the PM, thereby serving as a molecular bridge for the transfer of cholesterol from the PM to the ER. Plays a crucial role in cholesterol homeostasis in the adrenal gland and has the unique ability to localize to the PM based on the level of membrane cholesterol. In lipid-poor conditions localizes to the ER membrane and in response to excess cholesterol in the PM is recruited to the endoplasmic reticulum-plasma membrane contact sites (EPCS) which is mediated by the GRAM domain. At the EPCS, the sterol-binding VASt/ASTER domain binds to the cholesterol in the PM and facilitates its transfer from the PM to ER. This chain is Protein Aster-B (GRAMD1B), found in Homo sapiens (Human).